The primary structure comprises 826 residues: DNA mismatch repair protein MutS (826 aa).

Position 622 to 629 (622 to 629 (GPNMAGKS)) interacts with ATP.

This sequence belongs to the DNA mismatch repair MutS family.

This protein is involved in the repair of mismatches in DNA. It is possible that it carries out the mismatch recognition step. This protein has a weak ATPase activity. This Chlamydia abortus (strain DSM 27085 / S26/3) (Chlamydophila abortus) protein is DNA mismatch repair protein MutS.